A 228-amino-acid polypeptide reads, in one-letter code: ATP-dependent dethiobiotin synthetase BioD (228 aa).

13–18 (DIGKTF) serves as a coordination point for ATP. T17 serves as a coordination point for Mg(2+). K38 is a catalytic residue. A substrate-binding site is contributed by S42. ATP contacts are provided by residues D55, 116 to 119 (EGSG), 179 to 180 (NK), and 208 to 210 (PKI). Mg(2+) contacts are provided by D55 and E116.

This sequence belongs to the dethiobiotin synthetase family. In terms of assembly, homodimer. Requires Mg(2+) as cofactor.

It localises to the cytoplasm. The catalysed reaction is (7R,8S)-7,8-diammoniononanoate + CO2 + ATP = (4R,5S)-dethiobiotin + ADP + phosphate + 3 H(+). It functions in the pathway cofactor biosynthesis; biotin biosynthesis; biotin from 7,8-diaminononanoate: step 1/2. Functionally, catalyzes a mechanistically unusual reaction, the ATP-dependent insertion of CO2 between the N7 and N8 nitrogen atoms of 7,8-diaminopelargonic acid (DAPA, also called 7,8-diammoniononanoate) to form a ureido ring. In Clostridium perfringens (strain 13 / Type A), this protein is ATP-dependent dethiobiotin synthetase BioD.